The chain runs to 305 residues: MPFKRKDLLGLRELDVHEIEHILELAVSLKEINARPIKKVPTLRGKTVIHLFYEPSTRTRTSFDIAAKRLSADTYSITTAASSMVKGETLLDTVKNLEAMKPDVFVLRHTVSGTPHRIARHTTASVINAGDGMHEHPSQALLDMMTMLEHKKKLDGLTVAILGDIAHSRVARSNIWGLRKMGAKVILCGPITLIPPEAHTMGVEVSHKLGEIIPEADVIMVLRLQKERQQQMLLPSLREYSIYYGLTAEKLKKARRNVLIMHPGPLNRGVEISPDVADGPHSVILDQVTNGVAVRMALLYLLGQK.

The carbamoyl phosphate site is built by Arg58 and Thr59. An L-aspartate-binding site is contributed by Lys86. Residues Arg108, His136, and Gln139 each contribute to the carbamoyl phosphate site. L-aspartate contacts are provided by Arg169 and Arg223. Carbamoyl phosphate contacts are provided by Gly264 and Pro265.

The protein belongs to the aspartate/ornithine carbamoyltransferase superfamily. ATCase family. In terms of assembly, heterododecamer (2C3:3R2) of six catalytic PyrB chains organized as two trimers (C3), and six regulatory PyrI chains organized as three dimers (R2).

It carries out the reaction carbamoyl phosphate + L-aspartate = N-carbamoyl-L-aspartate + phosphate + H(+). It functions in the pathway pyrimidine metabolism; UMP biosynthesis via de novo pathway; (S)-dihydroorotate from bicarbonate: step 2/3. In terms of biological role, catalyzes the condensation of carbamoyl phosphate and aspartate to form carbamoyl aspartate and inorganic phosphate, the committed step in the de novo pyrimidine nucleotide biosynthesis pathway. The polypeptide is Aspartate carbamoyltransferase catalytic subunit (Syntrophobacter fumaroxidans (strain DSM 10017 / MPOB)).